Here is a 134-residue protein sequence, read N- to C-terminus: uncharacterized protein (134 aa).

Residues phenylalanine 13 to leucine 35 traverse the membrane as a helical segment.

Its subcellular location is the membrane. This is an uncharacterized protein from Archaeoglobus fulgidus (strain ATCC 49558 / DSM 4304 / JCM 9628 / NBRC 100126 / VC-16).